A 437-amino-acid polypeptide reads, in one-letter code: F-box only protein 9 (437 aa).

The segment at 1-26 (MSAEAEEDCHSDADRVGDEGNESPAE) is disordered. Ser2 carries the post-translational modification N-acetylalanine. The span at 8–26 (DCHSDADRVGDEGNESPAE) shows a compositional bias: basic and acidic residues. Residue His10 is modified to Phosphoserine. The stretch at 84–117 (ARELFLQAVEEEQNGALYEAIKFYRRAMQLVPDI) is one TPR repeat. The residue at position 126 (Ser126) is a Phosphoserine. Residues 175–226 (QTHISVLPMEVLMYIFRWVVSSDLDLRSLEQLSLVCRGFYICARDPEIWRLA) form the F-box domain.

Part of the SCF (SKP1-CUL1-F-box) E3 ubiquitin-protein ligase complex SCF(FBXO9) composed of CUL1, SKP1, RBX1 and FBXO9. Interacts with TTI1 and TELO2; when TTI1 and TELO2 are phosphorylated by CK2.

The protein resides in the cytoplasm. It participates in protein modification; protein ubiquitination. Its function is as follows. Substrate recognition component of a SCF (SKP1-CUL1-F-box protein) E3 ubiquitin-protein ligase complex which mediates the ubiquitination and subsequent proteasomal degradation of target proteins and plays a role in several biological processes such as cell cycle, cell proliferation, or maintenance of chromosome stability. Ubiquitinates mTORC1-bound TTI1 and TELO2 when they are phosphorylated by CK2 following growth factor deprivation, leading to their degradation. In contrast, does not mediate ubiquitination of TTI1 and TELO2 when they are part of the mTORC2 complex. As a consequence, mTORC1 is inactivated to restrain cell growth and protein translation, while mTORC2 is the activated due to the relief of feedback inhibition by mTORC1. Plays a role in maintaining epithelial cell survival by regulating the turn-over of chromatin modulator PRMT4 through ubiquitination and degradation by the proteasomal pathway. Also regulates PPARgamma stability by facilitating PPARgamma/PPARG ubiquitination and thereby plays a role in adipocyte differentiation. This chain is F-box only protein 9 (Fbxo9), found in Mus musculus (Mouse).